Here is a 115-residue protein sequence, read N- to C-terminus: uncharacterized protein (115 aa).

A compositionally biased stretch (basic residues) spans 90–100 (THFGRPATRRR). Positions 90-115 (THFGRPATRRRPLGEREVNPSARSLG) are disordered.

This is an uncharacterized protein from Saccharomyces cerevisiae (strain ATCC 204508 / S288c) (Baker's yeast).